Consider the following 195-residue polypeptide: Elongation factor P (195 aa).

The protein belongs to the elongation factor P family.

The protein resides in the cytoplasm. It participates in protein biosynthesis; polypeptide chain elongation. Its function is as follows. Involved in peptide bond synthesis. Stimulates efficient translation and peptide-bond synthesis on native or reconstituted 70S ribosomes in vitro. Probably functions indirectly by altering the affinity of the ribosome for aminoacyl-tRNA, thus increasing their reactivity as acceptors for peptidyl transferase. This is Elongation factor P from Rhodopirellula baltica (strain DSM 10527 / NCIMB 13988 / SH1).